The following is a 309-amino-acid chain: tRNA uridine(34) hydroxylase (309 aa).

Residues 126-220 form the Rhodanese domain; that stretch reads SDPEVIVIDT…YLEQIPPEES (95 aa). Cys180 functions as the Cysteine persulfide intermediate in the catalytic mechanism.

It belongs to the TrhO family.

It catalyses the reaction uridine(34) in tRNA + AH2 + O2 = 5-hydroxyuridine(34) in tRNA + A + H2O. Its function is as follows. Catalyzes oxygen-dependent 5-hydroxyuridine (ho5U) modification at position 34 in tRNAs. The sequence is that of tRNA uridine(34) hydroxylase from Nostoc sp. (strain PCC 7120 / SAG 25.82 / UTEX 2576).